A 190-amino-acid chain; its full sequence is Molybdenum cofactor guanylyltransferase (190 aa).

GTP is bound by residues 8–10, Lys-20, Asp-64, and Asp-98; that span reads LAG. Position 98 (Asp-98) interacts with Mg(2+).

This sequence belongs to the MobA family. Monomer. The cofactor is Mg(2+).

The protein localises to the cytoplasm. The catalysed reaction is Mo-molybdopterin + GTP + H(+) = Mo-molybdopterin guanine dinucleotide + diphosphate. Transfers a GMP moiety from GTP to Mo-molybdopterin (Mo-MPT) cofactor (Moco or molybdenum cofactor) to form Mo-molybdopterin guanine dinucleotide (Mo-MGD) cofactor. The sequence is that of Molybdenum cofactor guanylyltransferase from Rhodobacter capsulatus (Rhodopseudomonas capsulata).